The sequence spans 132 residues: Small ribosomal subunit protein uS8 (132 aa).

This sequence belongs to the universal ribosomal protein uS8 family. In terms of assembly, part of the 30S ribosomal subunit. Contacts proteins S5 and S12.

Functionally, one of the primary rRNA binding proteins, it binds directly to 16S rRNA central domain where it helps coordinate assembly of the platform of the 30S subunit. This chain is Small ribosomal subunit protein uS8, found in Mycobacterium avium (strain 104).